The chain runs to 86 residues: Small ribosomal subunit protein uS15 (86 aa).

The protein belongs to the universal ribosomal protein uS15 family. In terms of assembly, part of the 30S ribosomal subunit. Forms a bridge to the 50S subunit in the 70S ribosome, contacting the 23S rRNA.

Its function is as follows. One of the primary rRNA binding proteins, it binds directly to 16S rRNA where it helps nucleate assembly of the platform of the 30S subunit by binding and bridging several RNA helices of the 16S rRNA. In terms of biological role, forms an intersubunit bridge (bridge B4) with the 23S rRNA of the 50S subunit in the ribosome. The chain is Small ribosomal subunit protein uS15 from Mycoplasma pneumoniae (strain ATCC 29342 / M129 / Subtype 1) (Mycoplasmoides pneumoniae).